A 94-amino-acid chain; its full sequence is MKNAYKKVRVRYPVKRPDVKRKQRGPRAETQESRFLAAAVADEISGLSPLEKKAISLLEAKNNNKAQKLLRKRLGSHKRAVAKVEKLARMLLEK.

The segment covering 1–25 (MKNAYKKVRVRYPVKRPDVKRKQRG) has biased composition (basic residues). Residues 1 to 30 (MKNAYKKVRVRYPVKRPDVKRKQRGPRAET) are disordered.

It belongs to the eukaryotic ribosomal protein eL36 family. As to quaternary structure, component of the large ribosomal subunit.

The protein resides in the cytoplasm. The sequence is that of Large ribosomal subunit protein eL36 (RPL36) from Encephalitozoon cuniculi (strain GB-M1) (Microsporidian parasite).